Here is a 491-residue protein sequence, read N- to C-terminus: Glutamate--tRNA ligase (491 aa).

The 'HIGH' region motif lies at 13–23 (PSPTGFLHIGN). Positions 110, 112, 137, and 139 each coordinate Zn(2+). The 'KMSKS' region signature appears at 254–258 (KLSKR). Lysine 257 is an ATP binding site.

The protein belongs to the class-I aminoacyl-tRNA synthetase family. Glutamate--tRNA ligase type 1 subfamily. In terms of assembly, monomer. Zn(2+) is required as a cofactor.

Its subcellular location is the cytoplasm. It catalyses the reaction tRNA(Glu) + L-glutamate + ATP = L-glutamyl-tRNA(Glu) + AMP + diphosphate. Its function is as follows. Catalyzes the attachment of glutamate to tRNA(Glu) in a two-step reaction: glutamate is first activated by ATP to form Glu-AMP and then transferred to the acceptor end of tRNA(Glu). This Listeria monocytogenes serotype 4b (strain F2365) protein is Glutamate--tRNA ligase.